A 38-amino-acid chain; its full sequence is Cytochrome b6-f complex subunit 5 (38 aa).

The helical transmembrane segment at 5–25 threads the bilayer; the sequence is LLLGIVLGLIPVTLAGLFVAA.

This sequence belongs to the PetG family. As to quaternary structure, the 4 large subunits of the cytochrome b6-f complex are cytochrome b6, subunit IV (17 kDa polypeptide, PetD), cytochrome f and the Rieske protein, while the 4 small subunits are PetG, PetL, PetM and PetN. The complex functions as a dimer.

It localises to the cellular thylakoid membrane. Its function is as follows. Component of the cytochrome b6-f complex, which mediates electron transfer between photosystem II (PSII) and photosystem I (PSI), cyclic electron flow around PSI, and state transitions. PetG is required for either the stability or assembly of the cytochrome b6-f complex. The polypeptide is Cytochrome b6-f complex subunit 5 (Picosynechococcus sp. (strain ATCC 27264 / PCC 7002 / PR-6) (Agmenellum quadruplicatum)).